A 360-amino-acid polypeptide reads, in one-letter code: tRNA/tmRNA (uracil-C(5))-methyltransferase (360 aa).

Residues Gln-185, Tyr-213, Asn-218, Glu-234, and Asp-294 each contribute to the S-adenosyl-L-methionine site. Catalysis depends on Cys-319, which acts as the Nucleophile. Glu-353 (proton acceptor) is an active-site residue.

Belongs to the class I-like SAM-binding methyltransferase superfamily. RNA M5U methyltransferase family. TrmA subfamily.

The catalysed reaction is uridine(54) in tRNA + S-adenosyl-L-methionine = 5-methyluridine(54) in tRNA + S-adenosyl-L-homocysteine + H(+). The enzyme catalyses uridine(341) in tmRNA + S-adenosyl-L-methionine = 5-methyluridine(341) in tmRNA + S-adenosyl-L-homocysteine + H(+). Dual-specificity methyltransferase that catalyzes the formation of 5-methyluridine at position 54 (m5U54) in all tRNAs, and that of position 341 (m5U341) in tmRNA (transfer-mRNA). This is tRNA/tmRNA (uracil-C(5))-methyltransferase from Nitratiruptor sp. (strain SB155-2).